The primary structure comprises 905 residues: Alanine--tRNA ligase (905 aa).

4 residues coordinate Zn(2+): His-569, His-573, Cys-693, and His-697.

Belongs to the class-II aminoacyl-tRNA synthetase family. Requires Zn(2+) as cofactor.

The protein localises to the cytoplasm. It carries out the reaction tRNA(Ala) + L-alanine + ATP = L-alanyl-tRNA(Ala) + AMP + diphosphate. In terms of biological role, catalyzes the attachment of alanine to tRNA(Ala) in a two-step reaction: alanine is first activated by ATP to form Ala-AMP and then transferred to the acceptor end of tRNA(Ala). Also edits incorrectly charged Ser-tRNA(Ala) and Gly-tRNA(Ala) via its editing domain. The polypeptide is Alanine--tRNA ligase (Roseiflexus castenholzii (strain DSM 13941 / HLO8)).